The chain runs to 230 residues: Large ribosomal subunit protein uL1 (230 aa).

This sequence belongs to the universal ribosomal protein uL1 family. In terms of assembly, part of the 50S ribosomal subunit.

Its function is as follows. Binds directly to 23S rRNA. The L1 stalk is quite mobile in the ribosome, and is involved in E site tRNA release. Protein L1 is also a translational repressor protein, it controls the translation of the L11 operon by binding to its mRNA. In Acidithiobacillus ferrooxidans (strain ATCC 53993 / BNL-5-31) (Leptospirillum ferrooxidans (ATCC 53993)), this protein is Large ribosomal subunit protein uL1.